Reading from the N-terminus, the 292-residue chain is 4-hydroxy-tetrahydrodipicolinate synthase (292 aa).

Thr44 provides a ligand contact to pyruvate. Tyr132 acts as the Proton donor/acceptor in catalysis. Lys160 acts as the Schiff-base intermediate with substrate in catalysis. Residue Ile202 coordinates pyruvate.

It belongs to the DapA family. In terms of assembly, homotetramer; dimer of dimers.

The protein localises to the cytoplasm. The enzyme catalyses L-aspartate 4-semialdehyde + pyruvate = (2S,4S)-4-hydroxy-2,3,4,5-tetrahydrodipicolinate + H2O + H(+). It participates in amino-acid biosynthesis; L-lysine biosynthesis via DAP pathway; (S)-tetrahydrodipicolinate from L-aspartate: step 3/4. In terms of biological role, catalyzes the condensation of (S)-aspartate-beta-semialdehyde [(S)-ASA] and pyruvate to 4-hydroxy-tetrahydrodipicolinate (HTPA). The protein is 4-hydroxy-tetrahydrodipicolinate synthase of Magnetococcus marinus (strain ATCC BAA-1437 / JCM 17883 / MC-1).